The sequence spans 147 residues: Protein phosphatase 1 regulatory subunit 14A (147 aa).

Over residues 1 to 11 (MAAQRLGKRVL) the composition is skewed to basic residues. The interval 1-37 (MAAQRLGKRVLSKLQSPSRARGPGGSPGGLQKRHARV) is disordered. Phosphoserine is present on Ser-26. The inhibitory stretch occupies residues 35–120 (ARVTVKYDRR…LLVKLRGLHK (86 aa)). Thr-38 carries the phosphothreonine modification. The interval 118–147 (LHKQPGLRQPSPSGDGSLSPRQDRARTAPP) is disordered. Positions 127 to 137 (PSPSGDGSLSP) are enriched in polar residues. 3 positions are modified to phosphoserine: Ser-128, Ser-134, and Ser-136. The segment covering 138 to 147 (RQDRARTAPP) has biased composition (basic and acidic residues).

Belongs to the PP1 inhibitor family. Phosphorylation of Thr-38 induces a conformation change. Detected in aorta smooth muscle and bladder.

The protein resides in the cytoplasm. Functionally, inhibitor of PPP1CA. Has over 1000-fold higher inhibitory activity when phosphorylated, creating a molecular switch for regulating the phosphorylation status of PPP1CA substrates and smooth muscle contraction. The chain is Protein phosphatase 1 regulatory subunit 14A (CPI17) from Sus scrofa (Pig).